Reading from the N-terminus, the 729-residue chain is Fatty acid oxidation complex subunit alpha (729 aa).

Positions 1 to 189 (MLYKGDTLYL…KIGLVDGVVK (189 aa)) are enoyl-CoA hydratase/isomerase. D296 lines the substrate pocket. Residues 311–729 (ETPKQAAVLG…ARPVGSLKTA (419 aa)) form a 3-hydroxyacyl-CoA dehydrogenase region. NAD(+)-binding positions include M324, D343, 400-402 (VVE), K407, and S429. The active-site For 3-hydroxyacyl-CoA dehydrogenase activity is the H450. An NAD(+)-binding site is contributed by N453. Substrate is bound by residues N500 and Y660. Residues 708-729 (RHNEPYYPPVEPARPVGSLKTA) form a disordered region.

It in the N-terminal section; belongs to the enoyl-CoA hydratase/isomerase family. The protein in the C-terminal section; belongs to the 3-hydroxyacyl-CoA dehydrogenase family. Heterotetramer of two alpha chains (FadB) and two beta chains (FadA).

It carries out the reaction a (3S)-3-hydroxyacyl-CoA + NAD(+) = a 3-oxoacyl-CoA + NADH + H(+). The catalysed reaction is a (3S)-3-hydroxyacyl-CoA = a (2E)-enoyl-CoA + H2O. The enzyme catalyses a 4-saturated-(3S)-3-hydroxyacyl-CoA = a (3E)-enoyl-CoA + H2O. It catalyses the reaction (3S)-3-hydroxybutanoyl-CoA = (3R)-3-hydroxybutanoyl-CoA. It carries out the reaction a (3Z)-enoyl-CoA = a 4-saturated (2E)-enoyl-CoA. The catalysed reaction is a (3E)-enoyl-CoA = a 4-saturated (2E)-enoyl-CoA. It functions in the pathway lipid metabolism; fatty acid beta-oxidation. Involved in the aerobic and anaerobic degradation of long-chain fatty acids via beta-oxidation cycle. Catalyzes the formation of 3-oxoacyl-CoA from enoyl-CoA via L-3-hydroxyacyl-CoA. It can also use D-3-hydroxyacyl-CoA and cis-3-enoyl-CoA as substrate. This chain is Fatty acid oxidation complex subunit alpha, found in Salmonella gallinarum (strain 287/91 / NCTC 13346).